The chain runs to 45 residues: Defensin Tk-AMP-D3 (45 aa).

4 cysteine pairs are disulfide-bonded: C3–C45, C14–C34, C20–C39, and C24–C41.

Its function is as follows. Plant defense peptide. This Triticum kiharae (Wheat) protein is Defensin Tk-AMP-D3.